The sequence spans 575 residues: Proline--tRNA ligase (575 aa).

Belongs to the class-II aminoacyl-tRNA synthetase family. ProS type 1 subfamily. As to quaternary structure, homodimer.

The protein localises to the cytoplasm. The catalysed reaction is tRNA(Pro) + L-proline + ATP = L-prolyl-tRNA(Pro) + AMP + diphosphate. Functionally, catalyzes the attachment of proline to tRNA(Pro) in a two-step reaction: proline is first activated by ATP to form Pro-AMP and then transferred to the acceptor end of tRNA(Pro). As ProRS can inadvertently accommodate and process non-cognate amino acids such as alanine and cysteine, to avoid such errors it has two additional distinct editing activities against alanine. One activity is designated as 'pretransfer' editing and involves the tRNA(Pro)-independent hydrolysis of activated Ala-AMP. The other activity is designated 'posttransfer' editing and involves deacylation of mischarged Ala-tRNA(Pro). The misacylated Cys-tRNA(Pro) is not edited by ProRS. This is Proline--tRNA ligase from Heliobacterium modesticaldum (strain ATCC 51547 / Ice1).